The following is a 322-amino-acid chain: tRNA U34 carboxymethyltransferase (322 aa).

Residues K90, W104, K109, G129, 151–153, 180–181, M195, Y199, and R314 contribute to the carboxy-S-adenosyl-L-methionine site; these read DPT and IE.

It belongs to the class I-like SAM-binding methyltransferase superfamily. CmoB family. As to quaternary structure, homotetramer.

The enzyme catalyses carboxy-S-adenosyl-L-methionine + 5-hydroxyuridine(34) in tRNA = 5-carboxymethoxyuridine(34) in tRNA + S-adenosyl-L-homocysteine + H(+). In terms of biological role, catalyzes carboxymethyl transfer from carboxy-S-adenosyl-L-methionine (Cx-SAM) to 5-hydroxyuridine (ho5U) to form 5-carboxymethoxyuridine (cmo5U) at position 34 in tRNAs. The sequence is that of tRNA U34 carboxymethyltransferase from Citrobacter koseri (strain ATCC BAA-895 / CDC 4225-83 / SGSC4696).